The chain runs to 119 residues: UPF0102 protein GFO_3098 (119 aa).

The protein belongs to the UPF0102 family.

The chain is UPF0102 protein GFO_3098 from Christiangramia forsetii (strain DSM 17595 / CGMCC 1.15422 / KT0803) (Gramella forsetii).